The chain runs to 250 residues: Ribonuclease HII (250 aa).

The RNase H type-2 domain maps to 66-250 (QLVAGVDEVG…SFAPVSEYEK (185 aa)). Residues D72, E73, and D164 each coordinate a divalent metal cation.

This sequence belongs to the RNase HII family. Requires Mn(2+) as cofactor. Mg(2+) serves as cofactor.

The protein localises to the cytoplasm. It catalyses the reaction Endonucleolytic cleavage to 5'-phosphomonoester.. Its function is as follows. Endonuclease that specifically degrades the RNA of RNA-DNA hybrids. This chain is Ribonuclease HII, found in Lactobacillus johnsonii (strain CNCM I-12250 / La1 / NCC 533).